The sequence spans 264 residues: uncharacterized protein (264 aa).

The signal sequence occupies residues 1–22; it reads MIHSKKLTLGICLVLLIILIGG. Cysteine 23 is lipidated: N-palmitoyl cysteine. A lipid anchor (S-diacylglycerol cysteine) is attached at cysteine 23.

It belongs to the staphylococcal tandem lipoprotein family.

The protein resides in the cell membrane. This is an uncharacterized protein from Staphylococcus aureus (strain N315).